The sequence spans 204 residues: Urease accessory protein UreG (204 aa).

Residue 12-19 (GPVGSGKT) coordinates GTP.

The protein belongs to the SIMIBI class G3E GTPase family. UreG subfamily. As to quaternary structure, homodimer. UreD, UreF and UreG form a complex that acts as a GTP-hydrolysis-dependent molecular chaperone, activating the urease apoprotein by helping to assemble the nickel containing metallocenter of UreC. The UreE protein probably delivers the nickel.

It localises to the cytoplasm. Facilitates the functional incorporation of the urease nickel metallocenter. This process requires GTP hydrolysis, probably effectuated by UreG. The polypeptide is Urease accessory protein UreG (Pseudomonas fluorescens (strain SBW25)).